We begin with the raw amino-acid sequence, 277 residues long: Large ribosomal subunit protein uL2 (277 aa).

A disordered region spans residues 219–277 (TVRGSVMNPNDHPHGGGEGKAPVGRKAPSTPWGKPALGLKTRNKKAKSNKLIVRRRNEK). Over residues 259–277 (TRNKKAKSNKLIVRRRNEK) the composition is skewed to basic residues.

This sequence belongs to the universal ribosomal protein uL2 family. In terms of assembly, part of the 50S ribosomal subunit. Forms a bridge to the 30S subunit in the 70S ribosome.

One of the primary rRNA binding proteins. Required for association of the 30S and 50S subunits to form the 70S ribosome, for tRNA binding and peptide bond formation. It has been suggested to have peptidyltransferase activity; this is somewhat controversial. Makes several contacts with the 16S rRNA in the 70S ribosome. This is Large ribosomal subunit protein uL2 from Streptococcus equi subsp. zooepidemicus (strain MGCS10565).